A 1679-amino-acid polypeptide reads, in one-letter code: MEGTTNKDIGSGSSRPGGEVSVSDEIQRRFMEKKWVWAPSSKEAYVCGFVVKEEGDVLEIDCRGVIVRHKSCEVFRMNPPKFDMVDDLAELSYLNEPGVLHNLRRRYQNGRIYTYSGLFLLAINPYKDLRIYGEKDARKYTLSKKYELEPHIFAVANEAYRLMLSNRENQSILITGESGAGKTENTKRVVEFLAMVGGCKGMEVSIDRQIIDANPILEAFGNAQTVKNDNSSRFGKFIKIKFNGGNICGAHIEKYLLEKSRVTSQNRNERNYHIFYQLLGCDDQMLKKQLFLDGEPKDYRFLKDSRFKIPDVDDAKEFRSLRESMRVLGIGEEEQIGYFKIVSAILHLGNIEFREKDGAAEIANLDVAEKACKLLSIPLAEFIKRLIHPVIKAGNEYVAHSRSREQALKIVDGLSRILYDKMFEGVIDRINMSLDSPHKGNFIGVLDIAGFEIFEKNSFEQLCINYTNEKLQQFFNHHMFILEQEVYRQENIEWDFIDFGLDLQPTIDLIEKSNPIGILSYLDEECVMPMATEKTFLGKLMKNIRDEKFEVDKIRDAFVLNHYAGDVEYTVDDWLSKNKDSHSEALTSLIRASGSELVSRLSLNEEAVKKGFFRTVSQKHKEQLASLMSELRRTNPHFVRCIIPNLEKSGEHLDNGIVLGQLKCNGVLEGIRISRQGFPSRMGHREFVQRYRIMMKEKILVDESWDEGVCMELYKEIGGKILSEIGISTSQYRLGRTKVFFRQGVLADIEDMRDVKVSEVVKEIQALIRRRLAFRKYNQAQRRMQGILVIQRNGRICCDLQRWNWWRLYLKIKPLLDVRKRDGEMKEKEAMIQEYARMLDAEKSRREEVEDMLKAMSLKRELLEKSVEDEKRFSMEKDELLMALRYKSDETAQELEKARKEVFDGHEERKMWETRVNEVAIQLEEKDSEILRLRREVSEQKGALSQQEKEICSLREEVVSKLSEKDAMVEKMLRERDSEVQALKEKVKEKDAEVERILEGMKRMEREGEERNRMLKENESTIDELRTRCLNMKRWKDEYAELREDYEALQKKLKDEVEDMQVENDRLHNEIRKISKEREELGRMQKKLLDDLEFERNRGSKLEKAFQELRGEYEAVEGQLQKERQFRDSTQESLLEKTRGLERRVKSLNEKLRREEMANRQLMSEKDEMYREIHVLQQSKLDEIFDREAGFNSIKKNLQMEIQRLEMENQRLSVDLMEAKCMGEASEESISATERFCGMLEEERKKRKEIEYQASEHENRNVILSSEVEMLREMVEMERRSKEEVIRGHEKETGLCKAIAGVRKEVEDLGNEIDMAIEGFNGMYLNVLDGYKRDLKECKEQVMSKEQVIEELNGRIVRLGREVEERKEIEEEMSRKVHGLMKQYNGVMNDFSLLSTKCSSLERTVSEKEEEIKGYSERCSEYDKRFEGLVCRVDEEIENLRRSDEERRRCVEKLESGLNGSIAGIRKLDERYKARIEECAQSVLDGERRKLKAMEELCEQLSKKLGELEEEHQGLLDEKMKGLLRIEQLEGELCAFRESEVHRQDMISMYESEISTLKRCTRFKDEVLGSLSGERNPVVVHVSDKEKCQVLDRKRMTVEHELARANDERQSLMAINKKLREEVEKLRGEIDAGRSKMLEMKKKLGCQSLAVGHLSRELEEEREMVRFFRTLGGARKKKV.

Residues 1–14 are compositionally biased toward polar residues; the sequence is MEGTTNKDIGSGSS. Residues 1–22 are disordered; it reads MEGTTNKDIGSGSSRPGGEVSV. Residues 31 to 79 enclose the Myosin N-terminal SH3-like domain; it reads MEKKWVWAPSSKEAYVCGFVVKEEGDVLEIDCRGVIVRHKSCEVFRMNP. In terms of domain architecture, Myosin motor spans 83–754; the sequence is DMVDDLAELS…VLADIEDMRD (672 aa). 176-183 serves as a coordination point for ATP; sequence GESGAGKT. The tract at residues 624-646 is actin-binding; that stretch reads LASLMSELRRTNPHFVRCIIPNL. A coiled-coil region spans residues 823–1644; the sequence is GEMKEKEAMI…SKMLEMKKKL (822 aa).

Belongs to the TRAFAC class myosin-kinesin ATPase superfamily. Myosin family.

Functionally, cellular myosin that appears to play a role in cytokinesis, cell shape, and specialized functions such as secretion and capping. The polypeptide is Probable myosin heavy chain ECU04_1000 (Encephalitozoon cuniculi (strain GB-M1) (Microsporidian parasite)).